The following is a 141-amino-acid chain: Hemoglobin subunit alpha-D (141 aa).

The 141-residue stretch at 1 to 141 (MLTAEDKKLI…VAAVLAGKYR (141 aa)) folds into the Globin domain. Positions 58 and 87 each coordinate heme b.

Belongs to the globin family. In terms of assembly, heterotetramer of two alpha-D chains and two beta chains. Red blood cells.

Its function is as follows. Involved in oxygen transport from the lung to the various peripheral tissues. The polypeptide is Hemoglobin subunit alpha-D (HBAD) (Coturnix japonica (Japanese quail)).